Consider the following 515-residue polypeptide: 2,3-bisphosphoglycerate-independent phosphoglycerate mutase (515 aa).

Mn(2+)-binding residues include aspartate 14 and serine 64. Serine 64 acts as the Phosphoserine intermediate in catalysis. Substrate is bound by residues histidine 125, 155 to 156 (RD), arginine 187, arginine 193, 263 to 266 (RADR), and lysine 337. The Mn(2+) site is built by aspartate 404, histidine 408, aspartate 445, histidine 446, and histidine 464.

This sequence belongs to the BPG-independent phosphoglycerate mutase family. As to quaternary structure, monomer. It depends on Mn(2+) as a cofactor.

The enzyme catalyses (2R)-2-phosphoglycerate = (2R)-3-phosphoglycerate. It participates in carbohydrate degradation; glycolysis; pyruvate from D-glyceraldehyde 3-phosphate: step 3/5. In terms of biological role, catalyzes the interconversion of 2-phosphoglycerate and 3-phosphoglycerate. The polypeptide is 2,3-bisphosphoglycerate-independent phosphoglycerate mutase (Pseudomonas aeruginosa (strain UCBPP-PA14)).